Reading from the N-terminus, the 543-residue chain is Intermediate filament protein ifb-2 (543 aa).

The segment covering 1-10 (MSAVSYSMHR) has biased composition (polar residues). Residues 1 to 27 (MSAVSYSMHRTTTTTSSSSHGGVSAGH) form a disordered region. A head region spans residues 1–42 (MSAVSYSMHRTTTTTSSSSHGGVSAGHAAEEFVASAEREKQE). One can recognise an IF rod domain in the interval 39-388 (EKQEMQQLNS…KLVESEEGRF (350 aa)). The interval 43–74 (MQQLNSRLEVYISRVRQLEDRNKELVIELDTL) is coil 1A. Residues 75–88 (RGSLGNDIGQIKFK) form a linker 1 region. The segment at 89–223 (FNDSLVKVRR…RIHSQEITEL (135 aa)) is coil 1B. Positions 224-240 (RTLLAQAPADTREFFKN) are linker 12. The tract at residues 241–387 (ELALAIREIK…RKLVESEEGR (147 aa)) is coil 2. The segment at 388 to 542 (FTHVGQGVVV…SHIQTTVASS (155 aa)) is tail. Residues 420-538 (TRSSFKRHAK…IEKASHIQTT (119 aa)) enclose the LTD domain.

The protein belongs to the intermediate filament family. Expression is restricted to a discrete circumferential subapical layer within the intestinal terminal web (known as the 'endotube'); this layer joins directly to the apical junction complexes that connect adjacent gut cells.

It localises to the cytoplasm. In terms of biological role, cytoplasmic intermediate filaments provide mechanical strength to cells. Not essential protein. Component of the terminal web (organelle-depleted, intermediate filament-rich layer of cytoplasm that underlies the apical microvilli of polarized epithelial cells) in embryonic through to adult gut cells. Correct localization of filaments requires let-413. This Caenorhabditis elegans protein is Intermediate filament protein ifb-2 (ifb-2).